Here is a 91-residue protein sequence, read N- to C-terminus: Small ribosomal subunit protein bS16 (91 aa).

It belongs to the bacterial ribosomal protein bS16 family.

The chain is Small ribosomal subunit protein bS16 from Ruthia magnifica subsp. Calyptogena magnifica.